Reading from the N-terminus, the 437-residue chain is Aspartokinase (437 aa).

Belongs to the aspartokinase family.

The enzyme catalyses L-aspartate + ATP = 4-phospho-L-aspartate + ADP. It functions in the pathway amino-acid biosynthesis; L-lysine biosynthesis via DAP pathway; (S)-tetrahydrodipicolinate from L-aspartate: step 1/4. The protein operates within amino-acid biosynthesis; L-methionine biosynthesis via de novo pathway; L-homoserine from L-aspartate: step 1/3. It participates in amino-acid biosynthesis; L-threonine biosynthesis; L-threonine from L-aspartate: step 1/5. The chain is Aspartokinase (lysC) from Chlamydia muridarum (strain MoPn / Nigg).